The following is a 696-amino-acid chain: MLLGALRMEERKGLMGRERDQFPVGMRVLAVDDDPVCLKVLETLLRRCQYHVTSTNQAITALKLLRENRDMFDLVISDVHMPDMDGFKLLELVGLEMDLPVIMLSVNGETKTVMKGITHGACDYLLKPVRIEELRNIWQHVVRRKFGNRERNNLDFSKECNKPQSADTDHGPYQPTCGSSDQNGRSSRKRKELHGEDDDEGDDNDYQENDEPSAAKKPRVVWSVELHRKFVAAVNQLGIDKAVPKRILELMNVEKLTRENVASHLQKYRLYLKRLGAVASQQASIVAAFGGRDPSFLHIGAFEGLQSYQPFAPSAALPSFNPHGLLTRTSAAAAFGLQELAAPSSTIQTSTGNVTVGHCLEENQQANLAQGLTAAIGQPQLQQNWIHQEGNGLSDVFSGSSLTNTLSSTLQRVPSSSLPPQELLECKQAKVSMPPSIRIPPSSSALLERTLGVSTNLGDSSISQQGALPIDGGFSADRLPLHSSFDGAVATKLDTSLAASQREIGQQGKFSVSMLVSPSDNLALAKNAKTGASSSGSTIILPLDTARHSDYLQFGGASNSLQKMDGQKQDHIQSSNIIWSSMPSTQLPSDTQIHNTQNQRLDSGSFNHNIGAHLADQTNASASILPQMKFDTRISEEKMKQKNTYDLGSSKLQGGFNSSGCNFDGLLNSIIKVEKDDLPFMDNELGCDLFPLGACI.

Residues 27–142 (RVLAVDDDPV…ELRNIWQHVV (116 aa)) enclose the Response regulatory domain. The residue at position 78 (aspartate 78) is a 4-aspartylphosphate. Positions 154-214 (LDFSKECNKP…DYQENDEPSA (61 aa)) are disordered. Over residues 176 to 185 (TCGSSDQNGR) the composition is skewed to polar residues. Positions 195–211 (GEDDDEGDDNDYQENDE) are enriched in acidic residues. The segment at residues 214–273 (AAKKPRVVWSVELHRKFVAAVNQLGIDKAVPKRILELMNVEKLTRENVASHLQKYRLYLK) is a DNA-binding region (myb-like GARP).

It belongs to the ARR family. Type-B subfamily. Two-component system major event consists of a His-to-Asp phosphorelay between a sensor histidine kinase (HK) and a response regulator (RR). In plants, the His-to-Asp phosphorelay involves an additional intermediate named Histidine-containing phosphotransfer protein (HPt). This multistep phosphorelay consists of a His-Asp-His-Asp sequential transfer of a phosphate group between first a His and an Asp of the HK protein, followed by the transfer to a conserved His of the HPt protein and finally the transfer to an Asp in the receiver domain of the RR protein.

The protein resides in the nucleus. In terms of biological role, transcriptional activator that binds specific DNA sequence. Functions as a response regulator involved in His-to-Asp phosphorelay signal transduction system. Phosphorylation of the Asp residue in the receiver domain activates the ability of the protein to promote the transcription of target genes. May directly activate some type-A response regulators in response to cytokinins. Functions as a response regulator in response to cytokinins. In Oryza sativa subsp. japonica (Rice), this protein is Two-component response regulator ORR22.